Here is a 127-residue protein sequence, read N- to C-terminus: Putative defensin-like protein 180 (127 aa).

Residues 1-26 (MERITSLVFFASFLIIFVSGVNQTRA) form the signal peptide. Disulfide bonds link Cys29–Cys70, Cys36–Cys55, Cys39–Cys64, Cys43–Cys66, Cys81–Cys127, Cys92–Cys112, Cys97–Cys121, and Cys101–Cys123.

It belongs to the DEFL family.

It localises to the secreted. The polypeptide is Putative defensin-like protein 180 (LCR58) (Arabidopsis thaliana (Mouse-ear cress)).